The sequence spans 522 residues: 2-isopropylmalate synthase (522 aa).

A Pyruvate carboxyltransferase domain is found at 5–267; it reads VIIFDTTLRD…ETGINAKEIH (263 aa). Positions 14, 202, 204, and 238 each coordinate Mn(2+). A regulatory domain region spans residues 392–522; sequence QLRQLVVQSD…MHKNRELGGV (131 aa).

This sequence belongs to the alpha-IPM synthase/homocitrate synthase family. LeuA type 1 subfamily. In terms of assembly, homodimer. The cofactor is Mn(2+).

Its subcellular location is the cytoplasm. The enzyme catalyses 3-methyl-2-oxobutanoate + acetyl-CoA + H2O = (2S)-2-isopropylmalate + CoA + H(+). It functions in the pathway amino-acid biosynthesis; L-leucine biosynthesis; L-leucine from 3-methyl-2-oxobutanoate: step 1/4. Its function is as follows. Catalyzes the condensation of the acetyl group of acetyl-CoA with 3-methyl-2-oxobutanoate (2-ketoisovalerate) to form 3-carboxy-3-hydroxy-4-methylpentanoate (2-isopropylmalate). In Shewanella oneidensis (strain ATCC 700550 / JCM 31522 / CIP 106686 / LMG 19005 / NCIMB 14063 / MR-1), this protein is 2-isopropylmalate synthase.